A 465-amino-acid polypeptide reads, in one-letter code: Biotin biosynthesis bifunctional protein BioCD (465 aa).

The interval 1–254 (MTPFLPDRSI…AYGQWRKPRG (254 aa)) is malonyl-ACP O-methyltransferase. Residues D234 and 263 to 268 (GVGKTL) each bind ATP. The segment at 255–465 (VFVTGTDTGV…DSLLSSNASR (211 aa)) is DTB synthetase. T267 is a binding site for Mg(2+). K283 is a catalytic residue. Residue T287 participates in substrate binding. Residues D295, 351–354 (EGAG), and 435–437 (PQL) contribute to the ATP site. The Mg(2+) site is built by D295 and E351.

In the N-terminal section; belongs to the methyltransferase superfamily. This sequence in the C-terminal section; belongs to the dethiobiotin synthetase family. It depends on Mg(2+) as a cofactor.

The protein localises to the cytoplasm. The catalysed reaction is (7R,8S)-7,8-diammoniononanoate + CO2 + ATP = (4R,5S)-dethiobiotin + ADP + phosphate + 3 H(+). It catalyses the reaction malonyl-[ACP] + S-adenosyl-L-methionine = malonyl-[ACP] methyl ester + S-adenosyl-L-homocysteine. It functions in the pathway cofactor biosynthesis; biotin biosynthesis; biotin from 7,8-diaminononanoate: step 1/2. It participates in cofactor biosynthesis; biotin biosynthesis. Functionally, converts the free carboxyl group of a malonyl-thioester to its methyl ester by transfer of a methyl group from S-adenosyl-L-methionine (SAM). It allows synthesis of pimeloyl-ACP via the fatty acid synthetic pathway. Its function is as follows. Catalyzes a mechanistically unusual reaction, the ATP-dependent insertion of CO2 between the N7 and N8 nitrogen atoms of 7,8-diaminopelargonic acid (DAPA, also called 7,8-diammoniononanoate) to form a ureido ring. The sequence is that of Biotin biosynthesis bifunctional protein BioCD from Bordetella avium (strain 197N).